Consider the following 495-residue polypeptide: Dihydrolipoyl dehydrogenase, mitochondrial (495 aa).

FAD contacts are provided by residues 59 to 68 (EKNATLGGTC), lysine 77, and 169 to 171 (SGS). Cysteines 68 and 73 form a disulfide. NAD(+)-binding positions include 206-213 (GAGVIGLE), glutamate 229, valine 264, and glycine 299. FAD is bound by residues aspartate 340 and 346 to 349 (MLAH). Catalysis depends on histidine 472, which acts as the Proton acceptor.

It belongs to the class-I pyridine nucleotide-disulfide oxidoreductase family. FAD serves as cofactor.

Its subcellular location is the mitochondrion matrix. The catalysed reaction is N(6)-[(R)-dihydrolipoyl]-L-lysyl-[protein] + NAD(+) = N(6)-[(R)-lipoyl]-L-lysyl-[protein] + NADH + H(+). This is Dihydrolipoyl dehydrogenase, mitochondrial (dld-1) from Caenorhabditis elegans.